The following is a 260-amino-acid chain: Flagellar basal-body rod protein FlgG (260 aa).

It belongs to the flagella basal body rod proteins family. The basal body constitutes a major portion of the flagellar organelle and consists of four rings (L,P,S, and M) mounted on a central rod. The rod consists of about 26 subunits of FlgG in the distal portion, and FlgB, FlgC and FlgF are thought to build up the proximal portion of the rod with about 6 subunits each.

It localises to the bacterial flagellum basal body. The polypeptide is Flagellar basal-body rod protein FlgG (flgG) (Escherichia coli O157:H7).